The primary structure comprises 799 residues: Protein phosphatase 1 regulatory subunit 3F (799 aa).

The disordered stretch occupies residues 1–30 (MARTAPVEPPLRHPAPPSPAAGEPRASAEA). Topologically, residues 1–772 (MARTAPVEPP…LTQTLGVLAG (772 aa)) are cytoplasmic. Over residues 7-19 (VEPPLRHPAPPSP) the composition is skewed to pro residues. Residue S18 is modified to Phosphoserine. Low complexity predominate over residues 20 to 30 (AAGEPRASAEA). Residues 36 to 39 (RVLF) carry the PP1-binding motif motif. Disordered regions lie at residues 53 to 108 (RYRP…PVPA), 201 to 235 (SPPG…SPDD), 332 to 353 (RRRP…LAEH), and 417 to 439 (ATCG…DRAA). Residues 78–97 (ADEEDDGEDGDEGEEEEEAF) show a composition bias toward acidic residues. Positions 127–283 (LERLGRVMVE…NNHGRNYTVL (157 aa)) constitute a CBM21 domain. Residues 334 to 353 (RPFEEEPRMRSADDNTLAEH) show a composition bias toward basic and acidic residues. Phosphoserine is present on S545. 3 disordered regions span residues 566–600 (KDTE…PPEI), 663–688 (SKSP…SWVP), and 722–743 (PHVN…KRSP). Over residues 569–579 (EDPDDEGEGED) the composition is skewed to acidic residues. Positions 585–594 (PSSPEGGSPK) are enriched in low complexity. 2 positions are modified to phosphoserine: S587 and S592. The segment covering 679–688 (PTERESSWVP) has biased composition (basic and acidic residues). The chain crosses the membrane as a helical span at residues 773-793 (LVMVPVALNSGVSLLVLVLCL). Residues 794-799 (SLAWFS) are Extracellular-facing.

Highly expressed in brain (at protein level).

It is found in the membrane. Glycogen-targeting subunit for protein phosphatase 1 (PP1). This is Protein phosphatase 1 regulatory subunit 3F (Ppp1r3f) from Mus musculus (Mouse).